We begin with the raw amino-acid sequence, 242 residues long: Transcriptional activator protein BjaR1 (242 aa).

Residues 173 to 238 (TPYPSTRLTP…HAVALAIRHK (66 aa)) form the HTH luxR-type domain. Positions 197-216 (AWEIGEILHITQRTAEEHLA) form a DNA-binding region, H-T-H motif.

It belongs to the autoinducer-regulated transcriptional regulatory protein family.

Transcriptional activator that functions in response to the quorum-sensing autoinducer IV-HSL (isovaleryl-homoserine lactone). Activates BjaI expression. Is sensitive to IV-HSL at concentrations as low as 10 pM. This Bradyrhizobium diazoefficiens (strain JCM 10833 / BCRC 13528 / IAM 13628 / NBRC 14792 / USDA 110) protein is Transcriptional activator protein BjaR1 (bjaR1).